Consider the following 144-residue polypeptide: Snaclec trimecetin subunit beta (144 aa).

The first 23 residues, 1-23 (MGRFIFVSFGLLVVFLSLSGTAA), serve as a signal peptide directing secretion. Disulfide bonds link Cys25–Cys36, Cys53–Cys142, and Cys119–Cys134. A C-type lectin domain is found at 32–143 (FRRYCYQVFQ…CSSKRYVVCK (112 aa)).

Belongs to the snaclec family. Heterodimer of subunits alpha and beta; disulfide-linked. Expressed by the venom gland.

The protein localises to the secreted. Its function is as follows. Snaclec that induces platelet aggregation in either human platelet rich plasma (PRP) or washed platelet suspensions. It causes aggregation in a dose-dependent manner even in the absence of various platelet agonists such as ADP or von Willebrand factor (vWF). Interestingly, it does not induce aggregation in rabbit PRP. A monoclonal antibody against the platelet GPIb receptor blocks the aggregation induced by trimecetin, suggesting that it acts by binding to GPIb (GP1BA/GP1BB). This Protobothrops mucrosquamatus (Taiwan habu) protein is Snaclec trimecetin subunit beta.